We begin with the raw amino-acid sequence, 117 residues long: Eukaryotic translation initiation factor 4E-binding protein 1 (117 aa).

Composition is skewed to polar residues over residues 1-12 and 33-47; these read MSAGSSCSQTPS and YSTTPGGTLFSTTPG. The tract at residues 1–47 is disordered; sequence MSAGSSCSQTPSRAIPTRRVALGDGVQLPPGDYSTTPGGTLFSTTPG. N-acetylserine is present on Ser-2. 2 positions are modified to phosphothreonine: Thr-36 and Thr-40. The residue at position 43 (Ser-43) is a Phosphoserine. At Thr-45 the chain carries Phosphothreonine; by MTOR. Residue Thr-49 is modified to Phosphothreonine. Phosphotyrosine is present on Tyr-53. Positions 53 to 59 match the YXXXXLphi motif motif; the sequence is YDRKFLM. A Glycyl lysine isopeptide (Lys-Gly) (interchain with G-Cter in ubiquitin) cross-link involves residue Lys-56. Ser-64 is modified (phosphoserine; by DYRK2, MAPK1, MAPK3 and MTOR). The segment at 64–117 is disordered; that stretch reads SPVAKTPPKDLPTIPGVTSPTSDEPPMQASQSHLHSSPEDKRAGGEESQFEMDI. Thr-69 carries the post-translational modification Phosphothreonine; by MTOR. At Thr-76 the chain carries Phosphothreonine. A compositionally biased stretch (polar residues) spans 79–98; that stretch reads GVTSPTSDEPPMQASQSHLH. Phosphoserine is present on residues Ser-82, Ser-95, and Ser-99. The span at 99 to 108 shows a compositional bias: basic and acidic residues; sequence SSPEDKRAGG. Ser-100 bears the Phosphoserine; by DYRK2 mark. Residue Ser-111 is modified to Phosphoserine. Positions 113 to 117 match the TOS motif motif; the sequence is FEMDI.

The protein belongs to the eIF4E-binding protein family. Hypophosphorylated EIF4EBP1 competes with EIF4G1/EIF4G3 to interact with EIF4E; insulin stimulated MAP-kinase (MAPK1 and MAPK3) or mTORC1 phosphorylation of EIF4EBP1 causes dissociation of the complex allowing EIF4G1/EIF4G3 to bind and consequent initiation of translation. Interacts (via TOS motif) with RPTOR; promoting phosphorylation by mTORC1. In terms of processing, phosphorylated on serine and threonine residues in response to insulin, EGF and PDGF. Phosphorylation at Thr-36, Thr-45, Ser-64 and Thr-69, corresponding to the hyperphosphorylated form, is regulated by mTORC1 and abolishes binding to EIF4E. Post-translationally, ubiquitinated: when eIF4E levels are low, hypophosphorylated form is ubiquitinated by the BCR(KLHL25) complex, leading to its degradation and serving as a homeostatic mechanism to maintain translation and prevent eIF4E inhibition when eIF4E levels are low. Not ubiquitinated when hyperphosphorylated (at Thr-36, Thr-45, Ser-64 and Thr-69) or associated with eIF4E. Expressed in all tissues examined; highest levels in fat and skeletal tissue, lowest levels in kidney.

It is found in the cytoplasm. The protein localises to the nucleus. Its function is as follows. Repressor of translation initiation that regulates EIF4E activity by preventing its assembly into the eIF4F complex: hypophosphorylated form competes with EIF4G1/EIF4G3 and strongly binds to EIF4E, leading to repress translation. In contrast, hyperphosphorylated form dissociates from EIF4E, allowing interaction between EIF4G1/EIF4G3 and EIF4E, leading to initiation of translation. Mediates the regulation of protein translation by hormones, growth factors and other stimuli that signal through the MAP kinase and mTORC1 pathways. In Rattus norvegicus (Rat), this protein is Eukaryotic translation initiation factor 4E-binding protein 1 (Eif4ebp1).